Consider the following 430-residue polypeptide: MSTGSHSPEAMWSATNFRRHQRKPNQVLHRWFFKGSAWIIYAIACGLHFFKLHYNERTNQVEESQYHRIWSKIVVVLKVILLASPYLQYFVLGLGIYIHITLVQDSKAQNFLMSLIVLGIVIGVLRRLLIFLHLKRDRRFLKHTVNEILHITSALEQKFGMEYKCDSTLLVVYLAKLWILTVMLDSLWYKPYFLSSIFLYWVLLEYCFAGYFIYQLILLSWYHTIILFLQRFIEDHANRLDIELHYHRRLIPLFELHLRINNLHKHVRDNVSWLSTSVYLMIFTCIFNAELLIECSLFAGDELENKIYIITDGCLGPVCVPILYVLILGMCTDRFRDAEVQLQQLFVIVQGLYMRKVRPHLLIAMVLENEHTSLIIHQKLKPLENMIILDITCDREFVMDYIVTVILTALSLVQYTISTGGNISECVTHK.

The Cytoplasmic segment spans residues 1–31 (MSTGSHSPEAMWSATNFRRHQRKPNQVLHRW). The helical transmembrane segment at 32-52 (FFKGSAWIIYAIACGLHFFKL) threads the bilayer. The Extracellular segment spans residues 53 to 79 (HYNERTNQVEESQYHRIWSKIVVVLKV). The chain crosses the membrane as a helical span at residues 80 to 100 (ILLASPYLQYFVLGLGIYIHI). Residues 101–110 (TLVQDSKAQN) lie on the Cytoplasmic side of the membrane. Residues 111 to 131 (FLMSLIVLGIVIGVLRRLLIF) form a helical membrane-spanning segment. The Extracellular segment spans residues 132-168 (LHLKRDRRFLKHTVNEILHITSALEQKFGMEYKCDST). A helical membrane pass occupies residues 169–189 (LLVVYLAKLWILTVMLDSLWY). At 190 to 277 (KPYFLSSIFL…RDNVSWLSTS (88 aa)) the chain is on the cytoplasmic side. Residues 278 to 298 (VYLMIFTCIFNAELLIECSLF) traverse the membrane as a helical segment. At 299-306 (AGDELENK) the chain is on the extracellular side. A helical transmembrane segment spans residues 307-327 (IYIITDGCLGPVCVPILYVLI). At 328–396 (LGMCTDRFRD…IILDITCDRE (69 aa)) the chain is on the cytoplasmic side. A helical membrane pass occupies residues 397 to 417 (FVMDYIVTVILTALSLVQYTI). Topologically, residues 418-430 (STGGNISECVTHK) are extracellular. N-linked (GlcNAc...) asparagine glycosylation occurs at N422.

The protein resides in the cell membrane. This chain is Gustatory receptor-like 43a, found in Drosophila melanogaster (Fruit fly).